Reading from the N-terminus, the 98-residue chain is Aspartyl/glutamyl-tRNA(Asn/Gln) amidotransferase subunit C (98 aa).

Positions 70 to 98 (PSLTPEQALSGAPAQEQQRFKVPQILGED) are disordered.

It belongs to the GatC family. In terms of assembly, heterotrimer of A, B and C subunits.

The catalysed reaction is L-glutamyl-tRNA(Gln) + L-glutamine + ATP + H2O = L-glutaminyl-tRNA(Gln) + L-glutamate + ADP + phosphate + H(+). It catalyses the reaction L-aspartyl-tRNA(Asn) + L-glutamine + ATP + H2O = L-asparaginyl-tRNA(Asn) + L-glutamate + ADP + phosphate + 2 H(+). Allows the formation of correctly charged Asn-tRNA(Asn) or Gln-tRNA(Gln) through the transamidation of misacylated Asp-tRNA(Asn) or Glu-tRNA(Gln) in organisms which lack either or both of asparaginyl-tRNA or glutaminyl-tRNA synthetases. The reaction takes place in the presence of glutamine and ATP through an activated phospho-Asp-tRNA(Asn) or phospho-Glu-tRNA(Gln). This chain is Aspartyl/glutamyl-tRNA(Asn/Gln) amidotransferase subunit C, found in Streptomyces avermitilis (strain ATCC 31267 / DSM 46492 / JCM 5070 / NBRC 14893 / NCIMB 12804 / NRRL 8165 / MA-4680).